The sequence spans 111 residues: Putative FAD-linked sulfhydryl oxidase 347L (111 aa).

One can recognise an ERV/ALR sulfhydryl oxidase domain in the interval 2-109; sequence TDIDPHIWGP…LPESVARKKW (108 aa). Cys-49 and Cys-52 are oxidised to a cystine.

Belongs to the IIV-6 347L family. FAD is required as a cofactor.

It catalyses the reaction 2 R'C(R)SH + O2 = R'C(R)S-S(R)CR' + H2O2. FAD-dependent sulfhydryl oxidase that catalyzes disulfide bond formation. The protein is Putative FAD-linked sulfhydryl oxidase 347L of Invertebrate iridescent virus 6 (IIV-6).